The following is a 194-amino-acid chain: Crossover junction endodeoxyribonuclease RuvC (194 aa).

Residues D8, E72, and D144 contribute to the active site. 3 residues coordinate Mg(2+): D8, E72, and D144.

The protein belongs to the RuvC family. As to quaternary structure, homodimer which binds Holliday junction (HJ) DNA. The HJ becomes 2-fold symmetrical on binding to RuvC with unstacked arms; it has a different conformation from HJ DNA in complex with RuvA. In the full resolvosome a probable DNA-RuvA(4)-RuvB(12)-RuvC(2) complex forms which resolves the HJ. Mg(2+) is required as a cofactor.

It localises to the cytoplasm. The enzyme catalyses Endonucleolytic cleavage at a junction such as a reciprocal single-stranded crossover between two homologous DNA duplexes (Holliday junction).. In terms of biological role, the RuvA-RuvB-RuvC complex processes Holliday junction (HJ) DNA during genetic recombination and DNA repair. Endonuclease that resolves HJ intermediates. Cleaves cruciform DNA by making single-stranded nicks across the HJ at symmetrical positions within the homologous arms, yielding a 5'-phosphate and a 3'-hydroxyl group; requires a central core of homology in the junction. The consensus cleavage sequence is 5'-(A/T)TT(C/G)-3'. Cleavage occurs on the 3'-side of the TT dinucleotide at the point of strand exchange. HJ branch migration catalyzed by RuvA-RuvB allows RuvC to scan DNA until it finds its consensus sequence, where it cleaves and resolves the cruciform DNA. The polypeptide is Crossover junction endodeoxyribonuclease RuvC (Psychrobacter cryohalolentis (strain ATCC BAA-1226 / DSM 17306 / VKM B-2378 / K5)).